The sequence spans 428 residues: MNIAVVGLSHKTAPVEIREKLSIPEAKIESALTHLKGYPHIQEVAIISTCNRLEIYAVVTDTEKGVVEITQFLAEIGHIPLNVLRRYLFTLLHQDAVRHLLRVSAGLESLVLGEGQILAQVKNTHKLAQKYNTISQLLDRLFKQAMTAGKRVRTETSIGTGAVSISSAAVELAHAKVTDLSSKKIAIIGAGKMSRLLVTHLLAKGSQQIAIINRSQRRAQELAREFPHLPLQLYGLEEMMTTVAASDIVFTSTGATEPILTKTLLTEVTITANSLMLIDISVPRNVHTDVKELAQVQAFNVDDLKAVVAANQESRRQMAREAEALLEQEVEAFELWWRSLDTVPTISCLRSKIEDIREQELEKALSRLGTEFAEKHQEVIEAMTRGIVNKILHEPMVQLRAQQDIEARKRCLQSLQMLFNLSVGEEYS.

Substrate contacts are provided by residues 49 to 52 (TCNR), Ser109, 114 to 116 (EGQ), and Gln120. The Nucleophile role is filled by Cys50. 189 to 194 (GAGKMS) provides a ligand contact to NADP(+).

It belongs to the glutamyl-tRNA reductase family. In terms of assembly, homodimer.

It carries out the reaction (S)-4-amino-5-oxopentanoate + tRNA(Glu) + NADP(+) = L-glutamyl-tRNA(Glu) + NADPH + H(+). The protein operates within porphyrin-containing compound metabolism; protoporphyrin-IX biosynthesis; 5-aminolevulinate from L-glutamyl-tRNA(Glu): step 1/2. It participates in porphyrin-containing compound metabolism; chlorophyll biosynthesis. In terms of biological role, catalyzes the NADPH-dependent reduction of glutamyl-tRNA(Glu) to glutamate 1-semialdehyde (GSA). The sequence is that of Glutamyl-tRNA reductase from Microcystis aeruginosa (strain NIES-843 / IAM M-2473).